We begin with the raw amino-acid sequence, 154 residues long: MQGKSIRLGIVVAEFNYDITQLMLQKALSHAKFLNAEVKVVIKVPGTFDMPLAIKKLLEKDFIDAVVTLGAVIKGETKHDEIVASQTARKIVDLSTEFNKPVTLGIIGHGATHEQAVERIEEYATRAVEAAIKLVQRTRKIDELKEVKETVIID.

5-amino-6-(D-ribitylamino)uracil is bound by residues Phe-15, 47-49, and 71-73; these read TFD and AVI. A (2S)-2-hydroxy-3-oxobutyl phosphate-binding site is contributed by 76–77; that stretch reads ET. His-79 (proton donor) is an active-site residue. Leu-104 is a binding site for 5-amino-6-(D-ribitylamino)uracil. Arg-119 contributes to the (2S)-2-hydroxy-3-oxobutyl phosphate binding site.

Belongs to the DMRL synthase family.

The enzyme catalyses (2S)-2-hydroxy-3-oxobutyl phosphate + 5-amino-6-(D-ribitylamino)uracil = 6,7-dimethyl-8-(1-D-ribityl)lumazine + phosphate + 2 H2O + H(+). Its pathway is cofactor biosynthesis; riboflavin biosynthesis; riboflavin from 2-hydroxy-3-oxobutyl phosphate and 5-amino-6-(D-ribitylamino)uracil: step 1/2. Its function is as follows. Catalyzes the formation of 6,7-dimethyl-8-ribityllumazine by condensation of 5-amino-6-(D-ribitylamino)uracil with 3,4-dihydroxy-2-butanone 4-phosphate. This is the penultimate step in the biosynthesis of riboflavin. This chain is 6,7-dimethyl-8-ribityllumazine synthase, found in Saccharolobus islandicus (strain M.16.27) (Sulfolobus islandicus).